We begin with the raw amino-acid sequence, 393 residues long: S-adenosylmethionine synthase 1 (393 aa).

Glu-9 lines the Mg(2+) pocket. His-15 serves as a coordination point for ATP. Glu-43 is a binding site for K(+). The L-methionine site is built by Glu-56 and Gln-99. ATP contacts are provided by residues 167 to 169 (DGK), 235 to 238 (SGRF), Asp-246, 252 to 253 (RK), Ala-269, Lys-273, and Lys-277. Asp-246 is a binding site for L-methionine. Lys-277 serves as a coordination point for L-methionine.

Belongs to the AdoMet synthase family. Homotetramer. Mn(2+) is required as a cofactor. It depends on Mg(2+) as a cofactor. The cofactor is Co(2+). Requires K(+) as cofactor. In terms of tissue distribution, mostly expressed in stems.

It is found in the cytoplasm. It carries out the reaction L-methionine + ATP + H2O = S-adenosyl-L-methionine + phosphate + diphosphate. The protein operates within amino-acid biosynthesis; S-adenosyl-L-methionine biosynthesis; S-adenosyl-L-methionine from L-methionine: step 1/1. Its function is as follows. Catalyzes the formation of S-adenosylmethionine from methionine and ATP. The reaction comprises two steps that are both catalyzed by the same enzyme: formation of S-adenosylmethionine (AdoMet) and triphosphate, and subsequent hydrolysis of the triphosphate. This Solanum lycopersicum (Tomato) protein is S-adenosylmethionine synthase 1 (SAM1).